Reading from the N-terminus, the 469-residue chain is MNPNQKIITIGSVSLTIATVCFLMQIAILVTTVTLHFKQYECDSPANNQVMPCEPIIIERNITEIVYLTNTTIEKEICPKLVEYRNWSKPQCKITGFAPFSKDNSIRLSAGGDIWVTREPYVSCDPGKCYQFALGQGTTLDNKHSNDTIHDRIPHRTLLMNELGVPFHLGTRQVCIAWSSSSCHDGKAWLHVCVTGDDKNATASFIYDGRLVDSIGSWSQNILRTQESECVCINGTCTVVMTDGSASGRADTRILFIEEGKIVHISPLSGSAQHVEECSCYPRYPGVRCICRDNWKGSNRPVVDINVKDYSIDSRYVCSGLVGDTPRNNDRSSNSNCRNPNNERGNHGVKGWAFDDGNDVWMGRTISKDSRSGYETFKVIGGWSTPNSKSQINRQVIVDSDNRSGYSGIFSVESKSCINRCFYVELIRGREQETRVWWTSNSIVVFCGTSGTYGTGSWPDGADINLMPI.

At 1–9 (MNPNQKIIT) the chain is on the intravirion side. A helical transmembrane segment spans residues 10–30 (IGSVSLTIATVCFLMQIAILV). Residues 11 to 33 (GSVSLTIATVCFLMQIAILVTTV) are involved in apical transport and lipid raft association. Topologically, residues 31–469 (TTVTLHFKQY…DGADINLMPI (439 aa)) are virion surface. Residues 36-88 (HFKQYECDSPANNQVMPCEPIIIERNITEIVYLTNTTIEKEICPKLVEYRNWS) are hypervariable stalk region. Asn-61, Asn-70, and Asn-86 each carry an N-linked (GlcNAc...) asparagine; by host glycan. Positions 91-469 (QCKITGFAPF…DGADINLMPI (379 aa)) are head of neuraminidase. Intrachain disulfides connect Cys-92–Cys-417, Cys-124–Cys-129, Cys-183–Cys-230, Cys-232–Cys-237, Cys-278–Cys-291, Cys-280–Cys-289, Cys-318–Cys-337, and Cys-421–Cys-447. Arg-118 contacts substrate. The N-linked (GlcNAc...) asparagine; by host glycan is linked to Asn-146. The active-site Proton donor/acceptor is the Asp-151. Arg-152 provides a ligand contact to substrate. N-linked (GlcNAc...) asparagine; by host glycans are attached at residues Asn-200 and Asn-234. Position 276-277 (276-277 (EE)) interacts with substrate. Arg-292 is a substrate binding site. 3 residues coordinate Ca(2+): Asp-293, Gly-297, and Asp-324. A disordered region spans residues 326-350 (PRNNDRSSNSNCRNPNNERGNHGVK). Positions 331 to 343 (RSSNSNCRNPNNE) are enriched in low complexity. Arg-371 provides a ligand contact to substrate. Asn-402 carries an N-linked (GlcNAc...) asparagine; by host glycan. Tyr-406 functions as the Nucleophile in the catalytic mechanism.

This sequence belongs to the glycosyl hydrolase 34 family. Homotetramer. Ca(2+) serves as cofactor. Post-translationally, N-glycosylated.

Its subcellular location is the virion membrane. The protein resides in the host apical cell membrane. It catalyses the reaction Hydrolysis of alpha-(2-&gt;3)-, alpha-(2-&gt;6)-, alpha-(2-&gt;8)- glycosidic linkages of terminal sialic acid residues in oligosaccharides, glycoproteins, glycolipids, colominic acid and synthetic substrates.. Its activity is regulated as follows. Inhibited by the neuraminidase inhibitors zanamivir (Relenza) and oseltamivir (Tamiflu). These drugs interfere with the release of progeny virus from infected cells and are effective against all influenza strains. Resistance to neuraminidase inhibitors is quite rare. In terms of biological role, catalyzes the removal of terminal sialic acid residues from viral and cellular glycoconjugates. Cleaves off the terminal sialic acids on the glycosylated HA during virus budding to facilitate virus release. Additionally helps virus spread through the circulation by further removing sialic acids from the cell surface. These cleavages prevent self-aggregation and ensure the efficient spread of the progeny virus from cell to cell. Otherwise, infection would be limited to one round of replication. Described as a receptor-destroying enzyme because it cleaves a terminal sialic acid from the cellular receptors. May facilitate viral invasion of the upper airways by cleaving the sialic acid moieties on the mucin of the airway epithelial cells. Likely to plays a role in the budding process through its association with lipid rafts during intracellular transport. May additionally display a raft-association independent effect on budding. Plays a role in the determination of host range restriction on replication and virulence. Sialidase activity in late endosome/lysosome traffic seems to enhance virus replication. This is Neuraminidase from Influenza A virus (strain A/Qu/7/1970 H3N2).